Here is a 159-residue protein sequence, read N- to C-terminus: Endoribonuclease YbeY (159 aa).

Residues His125, His129, and His135 each contribute to the Zn(2+) site.

This sequence belongs to the endoribonuclease YbeY family. Zn(2+) serves as cofactor.

Its subcellular location is the cytoplasm. Functionally, single strand-specific metallo-endoribonuclease involved in late-stage 70S ribosome quality control and in maturation of the 3' terminus of the 16S rRNA. This is Endoribonuclease YbeY from Ligilactobacillus salivarius (strain UCC118) (Lactobacillus salivarius).